A 51-amino-acid chain; its full sequence is Cytochrome b559 subunit beta (51 aa).

A helical transmembrane segment spans residues 26-42; it reads WLAVHALTVPTIFFLGA. Histidine 30 serves as a coordination point for heme.

The protein belongs to the PsbE/PsbF family. Heterodimer of an alpha subunit and a beta subunit. PSII is composed of 1 copy each of membrane proteins PsbA, PsbB, PsbC, PsbD, PsbE, PsbF, PsbH, PsbI, PsbJ, PsbK, PsbL, PsbM, PsbT, PsbX, Psb30/Ycf12, peripheral proteins PsbO, CyanoQ (PsbQ), PsbU, PsbV and a large number of cofactors. It forms dimeric complexes. Heme b is required as a cofactor.

Its subcellular location is the cell inner membrane. In terms of biological role, this b-type cytochrome is tightly associated with the reaction center of photosystem II (PSII). PSII is a light-driven water:plastoquinone oxidoreductase that uses light energy to abstract electrons from H(2)O, generating O(2) and a proton gradient subsequently used for ATP formation. It consists of a core antenna complex that captures photons, and an electron transfer chain that converts photonic excitation into a charge separation. This chain is Cytochrome b559 subunit beta, found in Gloeobacter violaceus (strain ATCC 29082 / PCC 7421).